We begin with the raw amino-acid sequence, 114 residues long: MGSRPWALGLFCCCSSCFCLCCSRHRPVSRLAAVVGGAAAVPAVVSGVTGLILSPSQSPIFIQPTPSPRMSPLRPGLDLVFANPSDHSAPLGATRPSAPPLPHVVDLPQLGPRR.

Hydrophobic regions lie at residues 6-24 (WALGLFCCCSSCFCLCCSR) and 33-53 (AVVGGAAAVPAVVSGVTGLIL). Residues 28-68 (VSRLAAVVGGAAAVPAVVSGVTGLILSPSQSPIFIQPTPSP) form an interaction with host HPX region. The tract at residues 48–72 (VTGLILSPSQSPIFIQPTPSPRMSP) is interaction with the capsid protein. Serine 71 carries the post-translational modification Phosphoserine; by host. The tract at residues 72–114 (PLRPGLDLVFANPSDHSAPLGATRPSAPPLPHVVDLPQLGPRR) is homodimerization, and interaction with host AMBP/bikunin. Positions 85-114 (SDHSAPLGATRPSAPPLPHVVDLPQLGPRR) are disordered. The tract at residues 95–104 (RPSAPPLPHV) is interaction with host SRC, HCK, FYN, PIK3R3 and GRB2. The PTAP/PSAP motif signature appears at 96–99 (PSAP).

Belongs to the hepevirus ORF3 protein family. As to quaternary structure, forms homooligomers. Interacts with host SRC, HCK, FYN, PIK3R3 and GRB2 (via SH3 domain); binding does not activate the kinases. Interacts with host AMBP/bikunin and AMBP/alpha-1-microglobulin peptides. Interacts with host HPX/hemopexin. Interacts (when phosphorylated) with capsid protein ORF2. Interacts with host TSG101; this interaction plays a role in viral release from the host cell. Interacts with host SIRPA; this interaction down-regulates the phosphorylation of host IRF3. Post-translationally, palmitoylated in the N-terminus.

The protein localises to the host endoplasmic reticulum membrane. The protein resides in the host cytoplasm. It is found in the host cytoskeleton. It localises to the virion. Its subcellular location is the host cell membrane. Its function is as follows. Small multifunctional phosphoprotein involved in virion morphogenesis, egress and counteracting host innate immunity. Plays critical roles in the final steps of viral release by interacting with host TSG101, a member of the vacuolar protein-sorting pathway and using other cellular host proteins involved in vesicle formation pathway. Also acts as a viroporin and forms ion conductive pores allowing viral particle release. Impairs the generation of type I interferon by down-regulating host TLR3 and TLR7 as well as their downstream signaling pathways. Down-regulates the phosphorylation of host IRF3 via the interaction with host SIRP-alpha, thereby inhibiting IFN-I expression. Interacts with host microtubules. The chain is Protein ORF3 from Hepatitis E virus genotype 1 (isolate Human/India/Hyderabad) (HEV-1).